The sequence spans 256 residues: uncharacterized protein (256 aa).

9–33 (VTGGGQGIGAAIAQLFAENGMKVVI) provides a ligand contact to NADP(+). Ser140 lines the substrate pocket. Catalysis depends on Tyr153, which acts as the Proton acceptor.

Belongs to the short-chain dehydrogenases/reductases (SDR) family.

This is an uncharacterized protein from Thermotoga maritima (strain ATCC 43589 / DSM 3109 / JCM 10099 / NBRC 100826 / MSB8).